Here is a 203-residue protein sequence, read N- to C-terminus: Endo-type membrane-bound lytic murein transglycosylase A (203 aa).

The N-terminal stretch at 1–15 (MKLRWFAFLIVLLAG) is a signal peptide. C16 carries the N-palmitoyl cysteine lipid modification. A lipid anchor (S-diacylglycerol cysteine) is attached at C16.

This sequence belongs to the transglycosylase Slt family.

It localises to the cell outer membrane. The enzyme catalyses Endolytic cleavage of the (1-&gt;4)-beta-glycosidic linkage between N-acetylmuramic acid (MurNAc) and N-acetylglucosamine (GlcNAc) residues in peptidoglycan with concomitant formation of a 1,6-anhydrobond in the MurNAc residue.. Murein-degrading enzyme. May play a role in recycling of muropeptides during cell elongation and/or cell division. Preferentially cleaves at a distance of more than two disaccharide units from the ends of the glycan chain. In Escherichia coli O1:K1 / APEC, this protein is Endo-type membrane-bound lytic murein transglycosylase A.